We begin with the raw amino-acid sequence, 428 residues long: GTPase Obg (428 aa).

In terms of domain architecture, Obg spans Met-1 to Leu-158. Residues Ala-159–Glu-328 enclose the OBG-type G domain. Residues Gly-165 to Ser-172, Phe-190 to Thr-194, Asp-212 to Gly-215, Thr-282 to Asp-285, and Ser-309 to Val-311 each bind GTP. Ser-172 and Thr-192 together coordinate Mg(2+). The region spanning Tyr-350 to Asp-428 is the OCT domain.

The protein belongs to the TRAFAC class OBG-HflX-like GTPase superfamily. OBG GTPase family. Monomer. Mg(2+) serves as cofactor.

The protein resides in the cytoplasm. In terms of biological role, an essential GTPase which binds GTP, GDP and possibly (p)ppGpp with moderate affinity, with high nucleotide exchange rates and a fairly low GTP hydrolysis rate. Plays a role in control of the cell cycle, stress response, ribosome biogenesis and in those bacteria that undergo differentiation, in morphogenesis control. This chain is GTPase Obg, found in Lactobacillus gasseri (strain ATCC 33323 / DSM 20243 / BCRC 14619 / CIP 102991 / JCM 1131 / KCTC 3163 / NCIMB 11718 / NCTC 13722 / AM63).